We begin with the raw amino-acid sequence, 456 residues long: Phosphomethylpyrimidine synthase (456 aa).

Substrate contacts are provided by residues N80, M109, Y139, H175, 195–197 (SRG), 236–239 (DSLR), and E275. H279 serves as a coordination point for Zn(2+). Position 302 (Y302) interacts with substrate. Residue H343 coordinates Zn(2+). C423, C426, and C431 together coordinate [4Fe-4S] cluster.

Belongs to the ThiC family. [4Fe-4S] cluster is required as a cofactor.

The catalysed reaction is 5-amino-1-(5-phospho-beta-D-ribosyl)imidazole + S-adenosyl-L-methionine = 4-amino-2-methyl-5-(phosphooxymethyl)pyrimidine + CO + 5'-deoxyadenosine + formate + L-methionine + 3 H(+). It functions in the pathway cofactor biosynthesis; thiamine diphosphate biosynthesis. Functionally, catalyzes the synthesis of the hydroxymethylpyrimidine phosphate (HMP-P) moiety of thiamine from aminoimidazole ribotide (AIR) in a radical S-adenosyl-L-methionine (SAM)-dependent reaction. The protein is Phosphomethylpyrimidine synthase of Prochlorococcus marinus (strain MIT 9301).